A 180-amino-acid chain; its full sequence is NAD(P)H-quinone oxidoreductase subunit I, chloroplastic (180 aa).

4Fe-4S ferredoxin-type domains are found at residues 55–84 (GRIHFEFDKCIACEVCVRVCPIDLPLVDWR) and 95–124 (LNYSIDFGVCIFCGNCVEYCPTNCLSMTEE). Residues Cys64, Cys67, Cys70, Cys74, Cys104, Cys107, Cys110, and Cys114 each coordinate [4Fe-4S] cluster.

This sequence belongs to the complex I 23 kDa subunit family. In terms of assembly, NDH is composed of at least 16 different subunits, 5 of which are encoded in the nucleus. The cofactor is [4Fe-4S] cluster.

It is found in the plastid. Its subcellular location is the chloroplast thylakoid membrane. It catalyses the reaction a plastoquinone + NADH + (n+1) H(+)(in) = a plastoquinol + NAD(+) + n H(+)(out). It carries out the reaction a plastoquinone + NADPH + (n+1) H(+)(in) = a plastoquinol + NADP(+) + n H(+)(out). Its function is as follows. NDH shuttles electrons from NAD(P)H:plastoquinone, via FMN and iron-sulfur (Fe-S) centers, to quinones in the photosynthetic chain and possibly in a chloroplast respiratory chain. The immediate electron acceptor for the enzyme in this species is believed to be plastoquinone. Couples the redox reaction to proton translocation, and thus conserves the redox energy in a proton gradient. In Zea mays (Maize), this protein is NAD(P)H-quinone oxidoreductase subunit I, chloroplastic.